We begin with the raw amino-acid sequence, 1673 residues long: NBPF family member NBPF26 (1673 aa).

4 EGF-like domains span residues 24 to 63, 64 to 102, 105 to 143, and 144 to 180; these read HALQ…EYCQ, HRDP…EDCQ, TPHP…KECQ, and WTDA…QKCE. Disulfide bonds link C28–C41, C35–C51, C53–C62, C68–C79, C73–C90, C92–C101, C109–C121, C115–C131, C133–C142, C148–C159, C153–C168, C170–C179, C186–C198, C192–C207, C209–C218, C225–C236, and C230–C246. The EGF-like 5; calcium-binding domain maps to 182–219; sequence DVNECDIPGHCQHGGTCLNLPGSYQCQCLQGFTGQYCD. The 38-residue stretch at 221–258 folds into the EGF-like 6 domain; that stretch reads LYVPCAHSPCVNGGTCRQTGDFTFECNCLPVPDSTSSA. Residues 337-381 are a coiled coil; it reads RQFKEEKLAEQLKQAEELRQYKVLVHSQERELTQLKEKLREGRDA. Disordered regions lie at residues 423 to 463, 713 to 734, and 782 to 828; these read KLSP…KVPE, EKVQ…EVPE, and WEDA…EGYS. Positions 427 to 443 are enriched in acidic residues; that stretch reads ENDEDEDEDVQVEEDEK. Olduvai domains lie at 427–521, 698–790, 791–879, 882–937, 938–1029, 1032–1104, 1107–1162, 1163–1255, 1256–1348, 1351–1423, 1426–1481, 1482–1574, and 1575–1673; these read ENDE…NILP, ENDN…HIIP, ENES…ATGP, SREL…VDMD, EIEK…PSCP, SGEL…PSCP, SREL…LDVD, RIKK…RSKK, ERRR…PSCP, SREL…PSCP, and ERRR…IFPQ. Over residues 452-463 the composition is skewed to basic and acidic residues; sequence EVQKTEESKVPE. Composition is skewed to acidic residues over residues 792-801 and 812-824; these read NESDDEEEEE and ESEE…ESWD. The tract at residues 1242–1280 is disordered; it reads KGKGKKRRGRRSKKERRRGRKEGEEDQNPPCPRLSRELL. Basic residues predominate over residues 1243–1261; it reads GKGKKRRGRRSKKERRRGR. Residues 1561–1594 form a disordered region; that stretch reads KGKGKKRRGRRSKKERRRGRKEGEEDQNPPCPRL. Over residues 1562 to 1580 the composition is skewed to basic residues; the sequence is GKGKKRRGRRSKKERRRGR.

This sequence belongs to the NBPF family.

The protein resides in the cytoplasm. In Homo sapiens (Human), this protein is NBPF family member NBPF26.